Reading from the N-terminus, the 274-residue chain is Putative phosphoenolpyruvate synthase regulatory protein (274 aa).

154–161 (GVSRCGKT) contacts ADP.

The protein belongs to the pyruvate, phosphate/water dikinase regulatory protein family. PSRP subfamily.

The catalysed reaction is [pyruvate, water dikinase] + ADP = [pyruvate, water dikinase]-phosphate + AMP + H(+). The enzyme catalyses [pyruvate, water dikinase]-phosphate + phosphate + H(+) = [pyruvate, water dikinase] + diphosphate. Bifunctional serine/threonine kinase and phosphorylase involved in the regulation of the phosphoenolpyruvate synthase (PEPS) by catalyzing its phosphorylation/dephosphorylation. This is Putative phosphoenolpyruvate synthase regulatory protein from Pseudomonas aeruginosa (strain LESB58).